Here is a 184-residue protein sequence, read N- to C-terminus: Endothelial cell-specific molecule 1 (184 aa).

Residues 1 to 21 form the signal peptide; that stretch reads MKSLLLLTTLLIPLHLGMAWS. An IGFBP N-terminal domain is found at 24–102; that stretch reads YAVDCPEHCD…GDEFGVCKDC (79 aa). Cystine bridges form between cysteine 28/cysteine 51, cysteine 32/cysteine 53, cysteine 37/cysteine 54, cysteine 43/cysteine 57, cysteine 65/cysteine 83, and cysteine 77/cysteine 99. A disordered region spans residues 145–184; the sequence is RTSASQTERDAASGDGNAVREEIGDRNAARPSVMKWLNPR. A compositionally biased stretch (basic and acidic residues) spans 151–172; it reads TERDAASGDGNAVREEIGDRNA. Residue serine 157 is glycosylated (O-linked (Xyl...) (chondroitin sulfate) serine).

Post-translationally, O-glycosylated; contains chondroitin sulfate and dermatan sulfate. Pineal gland specific.

It is found in the secreted. Its function is as follows. Involved in angiogenesis; promotes angiogenic sprouting. May have potent implications in lung endothelial cell-leukocyte interactions. This is Endothelial cell-specific molecule 1 (Esm1) from Rattus norvegicus (Rat).